Reading from the N-terminus, the 670-residue chain is Zinc finger and BTB domain-containing protein 5 (670 aa).

Positions 24 to 93 (CDCVIVVGNR…MYTSTLMLGE (70 aa)) constitute a BTB domain. Disordered stretches follow at residues 158–256 (LSSS…QEDG) and 268–382 (EDAQ…SSTD). Over residues 170–181 (PMSSSMRSSLDQ) the composition is skewed to polar residues. At serine 234 the chain carries Phosphoserine. Lysine 239 participates in a covalent cross-link: Glycyl lysine isopeptide (Lys-Gly) (interchain with G-Cter in SUMO2). Over residues 285–295 (SRATQVETSFE) the composition is skewed to polar residues. Glycyl lysine isopeptide (Lys-Gly) (interchain with G-Cter in SUMO2) cross-links involve residues lysine 317 and lysine 325. Residues 345 to 360 (AEGSESVEVEGVVVSA) are compositionally biased toward low complexity. A compositionally biased stretch (basic and acidic residues) spans 361 to 374 (EKIDLSPESSDRSF). Serine 366 is modified (phosphoserine). Glycyl lysine isopeptide (Lys-Gly) (interchain with G-Cter in SUMO2) cross-links involve residues lysine 399 and lysine 410. Residues 414 to 432 (SNFSASQSTDDNLPNTTSD) show a composition bias toward polar residues. Disordered stretches follow at residues 414-433 (SNFS…TSDC) and 442-470 (LLSP…EPAD). Positions 444-459 (SPEAGPAGGPSSAPGS) are enriched in low complexity. Residues lysine 535, lysine 587, and lysine 590 each participate in a glycyl lysine isopeptide (Lys-Gly) (interchain with G-Cter in SUMO2) cross-link. A C2H2-type 1 zinc finger spans residues 606-628 (YACKICCKTFLTLTDCKKHIRVH). The segment at 634–657 (YACLKCGKRFSQSSHLYKHSKTTC) adopts a C2H2-type 2; atypical zinc-finger fold. Residues lysine 638 and lysine 651 each participate in a glycyl lysine isopeptide (Lys-Gly) (interchain with G-Cter in SUMO2) cross-link.

The protein resides in the nucleus. Its function is as follows. May be involved in transcriptional regulation. This Mus musculus (Mouse) protein is Zinc finger and BTB domain-containing protein 5 (Zbtb5).